A 185-amino-acid chain; its full sequence is Probable E3 ubiquitin-protein ligase ATL44 (185 aa).

The helical transmembrane segment at 29–49 (VVILSALLCALICVAGLAAVV) threads the bilayer. The RING-type; atypical zinc finger occupies 102–144 (CAICLTDFADGEEIRVLPLCGHSFHVECIDKWLVSRSSCPSCR). Positions 163-185 (MKDQAHRHQHHQHSSTTIPTFLP) are disordered. Over residues 176–185 (SSTTIPTFLP) the composition is skewed to polar residues.

It belongs to the RING-type zinc finger family. ATL subfamily. Interacts with BIK1. In terms of processing, auto-monoubiquitination. Expressed in stems, flowers and green siliques.

The protein resides in the membrane. It carries out the reaction S-ubiquitinyl-[E2 ubiquitin-conjugating enzyme]-L-cysteine + [acceptor protein]-L-lysine = [E2 ubiquitin-conjugating enzyme]-L-cysteine + N(6)-ubiquitinyl-[acceptor protein]-L-lysine.. Its pathway is protein modification; protein ubiquitination. In terms of biological role, E3 ubiquitin-protein ligase that possess E3 ubiquitin ligase activity in vitro and mediates protein monoubiquitination. Triggers the monoubiquitination of phosphorylated BIK1 in response to pathogen-associated molecular pattern (PAMP) detection. The protein is Probable E3 ubiquitin-protein ligase ATL44 of Arabidopsis thaliana (Mouse-ear cress).